We begin with the raw amino-acid sequence, 336 residues long: Flap endonuclease 1 (336 aa).

Residues 1 to 98 form an N-domain region; that stretch reads MGVDLGDILS…GTLAARAQMK (98 aa). Positions 27, 80, 150, 152, 171, 173, and 234 each coordinate Mg(2+). The tract at residues 114–255 is I-domain; sequence DSFRYAQATA…RALKLIREHG (142 aa). The interaction with PCNA stretch occupies residues 328–336; sequence GQSTLERWL.

The protein belongs to the XPG/RAD2 endonuclease family. FEN1 subfamily. In terms of assembly, interacts with PCNA. PCNA stimulates the nuclease activity without altering cleavage specificity. The cofactor is Mg(2+).

Its function is as follows. Structure-specific nuclease with 5'-flap endonuclease and 5'-3' exonuclease activities involved in DNA replication and repair. During DNA replication, cleaves the 5'-overhanging flap structure that is generated by displacement synthesis when DNA polymerase encounters the 5'-end of a downstream Okazaki fragment. Binds the unpaired 3'-DNA end and kinks the DNA to facilitate 5' cleavage specificity. Cleaves one nucleotide into the double-stranded DNA from the junction in flap DNA, leaving a nick for ligation. Also involved in the base excision repair (BER) pathway. Acts as a genome stabilization factor that prevents flaps from equilibrating into structures that lead to duplications and deletions. Also possesses 5'-3' exonuclease activity on nicked or gapped double-stranded DNA. The protein is Flap endonuclease 1 of Methanothrix thermoacetophila (strain DSM 6194 / JCM 14653 / NBRC 101360 / PT) (Methanosaeta thermophila).